Reading from the N-terminus, the 159-residue chain is 2-C-methyl-D-erythritol 2,4-cyclodiphosphate synthase (159 aa).

Positions 10 and 12 each coordinate a divalent metal cation. 4-CDP-2-C-methyl-D-erythritol 2-phosphate contacts are provided by residues 10–12 (DVH) and 37–38 (HS). H45 provides a ligand contact to a divalent metal cation. 4-CDP-2-C-methyl-D-erythritol 2-phosphate contacts are provided by residues 59-61 (DIG), 64-68 (FLDTD), 103-109 (AQAPKML), 135-138 (TTTE), F142, and R145.

Belongs to the IspF family. Homotrimer. It depends on a divalent metal cation as a cofactor.

It carries out the reaction 4-CDP-2-C-methyl-D-erythritol 2-phosphate = 2-C-methyl-D-erythritol 2,4-cyclic diphosphate + CMP. Its pathway is isoprenoid biosynthesis; isopentenyl diphosphate biosynthesis via DXP pathway; isopentenyl diphosphate from 1-deoxy-D-xylulose 5-phosphate: step 4/6. In terms of biological role, involved in the biosynthesis of isopentenyl diphosphate (IPP) and dimethylallyl diphosphate (DMAPP), two major building blocks of isoprenoid compounds. Catalyzes the conversion of 4-diphosphocytidyl-2-C-methyl-D-erythritol 2-phosphate (CDP-ME2P) to 2-C-methyl-D-erythritol 2,4-cyclodiphosphate (ME-CPP) with a corresponding release of cytidine 5-monophosphate (CMP). The polypeptide is 2-C-methyl-D-erythritol 2,4-cyclodiphosphate synthase (Francisella tularensis subsp. holarctica (strain FTNF002-00 / FTA)).